A 132-amino-acid chain; its full sequence is Phosphoribosyl-AMP cyclohydrolase (132 aa).

Aspartate 79 serves as a coordination point for Mg(2+). A Zn(2+)-binding site is contributed by cysteine 80. Residues aspartate 81 and aspartate 83 each contribute to the Mg(2+) site. The Zn(2+) site is built by cysteine 100 and cysteine 107.

It belongs to the PRA-CH family. In terms of assembly, homodimer. It depends on Mg(2+) as a cofactor. The cofactor is Zn(2+).

Its subcellular location is the cytoplasm. It catalyses the reaction 1-(5-phospho-beta-D-ribosyl)-5'-AMP + H2O = 1-(5-phospho-beta-D-ribosyl)-5-[(5-phospho-beta-D-ribosylamino)methylideneamino]imidazole-4-carboxamide. It participates in amino-acid biosynthesis; L-histidine biosynthesis; L-histidine from 5-phospho-alpha-D-ribose 1-diphosphate: step 3/9. Its function is as follows. Catalyzes the hydrolysis of the adenine ring of phosphoribosyl-AMP. The chain is Phosphoribosyl-AMP cyclohydrolase from Acidovorax ebreus (strain TPSY) (Diaphorobacter sp. (strain TPSY)).